A 441-amino-acid polypeptide reads, in one-letter code: Xylose isomerase (441 aa).

Active-site residues include His105 and Asp108. Mg(2+)-binding residues include Glu236, Glu272, His275, Asp300, Asp311, Asp313, and Asp343.

This sequence belongs to the xylose isomerase family. In terms of assembly, homotetramer. Requires Mg(2+) as cofactor.

Its subcellular location is the cytoplasm. It carries out the reaction alpha-D-xylose = alpha-D-xylulofuranose. This chain is Xylose isomerase, found in Mesorhizobium japonicum (strain LMG 29417 / CECT 9101 / MAFF 303099) (Mesorhizobium loti (strain MAFF 303099)).